A 147-amino-acid polypeptide reads, in one-letter code: Protein phosphatase 1 regulatory subunit 14B (147 aa).

The span at 1–15 shows a compositional bias: low complexity; the sequence is MADSGPAGGAALAAP. The interval 1 to 55 is disordered; it reads MADSGPAGGAALAAPAPGPGSGGAGPRVYFQSPPGAAGEGPGGADDEGPVRRQGK. An N-acetylalanine modification is found at Ala2. A Phosphoserine modification is found at Ser21. A Phosphotyrosine modification is found at Tyr29. Residue Ser32 is modified to Phosphoserine. Thr57 carries the phosphothreonine modification. A coiled-coil region spans residues 61–103; that stretch reads DRKELRKRLNLEEWILEQLTRLYDCQEEEIPELEIDVDELLDM.

Belongs to the PP1 inhibitor family. Post-translationally, phosphorylated primarily on Thr-57 by PKC (in vitro). An unknown Ser is also phosphorylated by PKC (in vitro).

The protein localises to the cytoplasm. In terms of biological role, inhibitor of PPP1CA. Has over 50-fold higher inhibitory activity when phosphorylated. This is Protein phosphatase 1 regulatory subunit 14B (PPP1R14B) from Sus scrofa (Pig).